A 208-amino-acid polypeptide reads, in one-letter code: LexA repressor (208 aa).

Residues 30-50 (VREICAAVKLSSTSTVHGHLA) constitute a DNA-binding region (H-T-H motif). Residues Ser129 and Lys167 each act as for autocatalytic cleavage activity in the active site.

It belongs to the peptidase S24 family. In terms of assembly, homodimer.

The catalysed reaction is Hydrolysis of Ala-|-Gly bond in repressor LexA.. In terms of biological role, represses a number of genes involved in the response to DNA damage (SOS response), including recA and lexA. In the presence of single-stranded DNA, RecA interacts with LexA causing an autocatalytic cleavage which disrupts the DNA-binding part of LexA, leading to derepression of the SOS regulon and eventually DNA repair. The protein is LexA repressor of Lactobacillus helveticus (strain DPC 4571).